A 215-amino-acid polypeptide reads, in one-letter code: Probable transaldolase (215 aa).

Lys83 (schiff-base intermediate with substrate) is an active-site residue.

This sequence belongs to the transaldolase family. Type 3B subfamily.

It localises to the cytoplasm. The enzyme catalyses D-sedoheptulose 7-phosphate + D-glyceraldehyde 3-phosphate = D-erythrose 4-phosphate + beta-D-fructose 6-phosphate. It participates in carbohydrate degradation; pentose phosphate pathway; D-glyceraldehyde 3-phosphate and beta-D-fructose 6-phosphate from D-ribose 5-phosphate and D-xylulose 5-phosphate (non-oxidative stage): step 2/3. Functionally, transaldolase is important for the balance of metabolites in the pentose-phosphate pathway. This Clostridium kluyveri (strain NBRC 12016) protein is Probable transaldolase.